Reading from the N-terminus, the 435-residue chain is Probable histidine--tRNA ligase, cytoplasmic (435 aa).

This sequence belongs to the class-II aminoacyl-tRNA synthetase family.

The protein localises to the cytoplasm. It carries out the reaction tRNA(His) + L-histidine + ATP = L-histidyl-tRNA(His) + AMP + diphosphate + H(+). The sequence is that of Probable histidine--tRNA ligase, cytoplasmic from Encephalitozoon cuniculi (strain GB-M1) (Microsporidian parasite).